The primary structure comprises 375 residues: Carboxypeptidase O (375 aa).

The N-terminal stretch at Met1–Gly20 is a signal peptide. The 296-residue stretch at Arg50–Val345 folds into the Peptidase M14 domain. Residues His109 and Glu112 each coordinate Zn(2+). An N-linked (GlcNAc...) asparagine glycan is attached at Asn175. Position 237 (His237) interacts with Zn(2+). The N-linked (GlcNAc...) asparagine glycan is linked to Asn252. Residue Glu311 is the Proton donor/acceptor of the active site. N-linked (GlcNAc...) asparagine glycosylation is present at Asn315. Ser354 is lipidated: GPI-anchor amidated serine. The propeptide at Ala355–Leu375 is removed in mature form.

This sequence belongs to the peptidase M14 family. It depends on Zn(2+) as a cofactor.

It is found in the apical cell membrane. Carboxypeptidase which preferentially cleaves C-terminal acidic residues from peptides and proteins. Can also cleave C-terminal hydrophobic amino acids, with a preference for small residues over large residues. The sequence is that of Carboxypeptidase O from Bos taurus (Bovine).